Reading from the N-terminus, the 288-residue chain is Energy-coupling factor transporter ATP-binding protein EcfA2 (288 aa).

Positions 3-246 (IKLEQLGYCY…PDALVDLGLS (244 aa)) constitute an ABC transporter domain. 40 to 47 (GHTGSGKS) contacts ATP.

It belongs to the ABC transporter superfamily. Energy-coupling factor EcfA family. As to quaternary structure, forms a stable energy-coupling factor (ECF) transporter complex composed of 2 membrane-embedded substrate-binding proteins (S component), 2 ATP-binding proteins (A component) and 2 transmembrane proteins (T component).

The protein localises to the cell membrane. Functionally, ATP-binding (A) component of a common energy-coupling factor (ECF) ABC-transporter complex. Unlike classic ABC transporters this ECF transporter provides the energy necessary to transport a number of different substrates. In Listeria welshimeri serovar 6b (strain ATCC 35897 / DSM 20650 / CCUG 15529 / CIP 8149 / NCTC 11857 / SLCC 5334 / V8), this protein is Energy-coupling factor transporter ATP-binding protein EcfA2.